Reading from the N-terminus, the 353-residue chain is Probable dual-specificity RNA methyltransferase RlmN (353 aa).

The Proton acceptor role is filled by Glu-104. Residues 112 to 341 form the Radical SAM core domain; the sequence is DGGRKTICIS…ILNRRSPGKD (230 aa). Cysteines 119 and 346 form a disulfide. Positions 126, 130, and 133 each coordinate [4Fe-4S] cluster. S-adenosyl-L-methionine contacts are provided by residues 173-174, Ser-205, 228-230, and Asn-304; these read GE and SLN. Cys-346 functions as the S-methylcysteine intermediate in the catalytic mechanism.

It belongs to the radical SAM superfamily. RlmN family. It depends on [4Fe-4S] cluster as a cofactor.

Its subcellular location is the cytoplasm. The enzyme catalyses adenosine(2503) in 23S rRNA + 2 reduced [2Fe-2S]-[ferredoxin] + 2 S-adenosyl-L-methionine = 2-methyladenosine(2503) in 23S rRNA + 5'-deoxyadenosine + L-methionine + 2 oxidized [2Fe-2S]-[ferredoxin] + S-adenosyl-L-homocysteine. It carries out the reaction adenosine(37) in tRNA + 2 reduced [2Fe-2S]-[ferredoxin] + 2 S-adenosyl-L-methionine = 2-methyladenosine(37) in tRNA + 5'-deoxyadenosine + L-methionine + 2 oxidized [2Fe-2S]-[ferredoxin] + S-adenosyl-L-homocysteine. Its function is as follows. Specifically methylates position 2 of adenine 2503 in 23S rRNA and position 2 of adenine 37 in tRNAs. In Leptospira interrogans serogroup Icterohaemorrhagiae serovar copenhageni (strain Fiocruz L1-130), this protein is Probable dual-specificity RNA methyltransferase RlmN.